Here is a 553-residue protein sequence, read N- to C-terminus: Fusion glycoprotein F0 (553 aa).

The first 31 residues, 1 to 31, serve as a signal peptide directing secretion; it reads MGSRPFTKNPAPMMLTIRVALVLSCICPANS. Over 31-500 the chain is Extracellular; sequence SIDGRPFAAA…VNVKLTSTSA (470 aa). Intrachain disulfides connect cysteine 76/cysteine 199, cysteine 338/cysteine 347, cysteine 362/cysteine 370, cysteine 394/cysteine 399, and cysteine 401/cysteine 424. Asparagine 85 and asparagine 191 each carry an N-linked (GlcNAc...) asparagine; by host glycan. Asparagine 366 carries N-linked (GlcNAc...) asparagine; by host glycosylation. N-linked (GlcNAc...) asparagine; by host glycans are attached at residues asparagine 447 and asparagine 471. Residues 463 to 499 are a coiled coil; that stretch reads ISTELGNVNNSISNALNKLEESNRKLDKVNVKLTSTS. Residues 501–521 form a helical membrane-spanning segment; that stretch reads LITYIVLTIISLVFGILSLIL. The Cytoplasmic segment spans residues 522–553; that stretch reads ACYLMYKQKAQQKTLLWLGNNTLDQMRATTKM. A lipid anchor (S-palmitoyl cysteine; by host) is attached at cysteine 523.

Belongs to the paramyxoviruses fusion glycoprotein family. As to quaternary structure, homotrimer of disulfide-linked F1-F2. In terms of processing, the inactive precursor F0 is glycosylated and proteolytically cleaved into F1 and F2 to be functionally active. The cleavage is mediated by cellular proteases during the transport and maturation of the polypeptide.

It is found in the virion membrane. It localises to the host cell membrane. In terms of biological role, class I viral fusion protein. Under the current model, the protein has at least 3 conformational states: pre-fusion native state, pre-hairpin intermediate state, and post-fusion hairpin state. During viral and plasma cell membrane fusion, the heptad repeat (HR) regions assume a trimer-of-hairpins structure, positioning the fusion peptide in close proximity to the C-terminal region of the ectodomain. The formation of this structure appears to drive apposition and subsequent fusion of viral and plasma cell membranes. Directs fusion of viral and cellular membranes leading to delivery of the nucleocapsid into the cytoplasm. This fusion is pH independent and occurs directly at the outer cell membrane. The trimer of F1-F2 (F protein) probably interacts with HN at the virion surface. Upon HN binding to its cellular receptor, the hydrophobic fusion peptide is unmasked and interacts with the cellular membrane, inducing the fusion between cell and virion membranes. Later in infection, F proteins expressed at the plasma membrane of infected cells could mediate fusion with adjacent cells to form syncytia, a cytopathic effect that could lead to tissue necrosis. This Gallus gallus (Chicken) protein is Fusion glycoprotein F0 (F).